The sequence spans 348 residues: Bombesin receptor-activated protein C6orf89 homolog (348 aa).

Over 1-58 (MDLAANEISIYDKLSETVDLVRQTGHQCGMSEKAIEKFIRQLLEKNEPQRGPPQYPLL) the chain is Cytoplasmic. A helical transmembrane segment spans residues 59 to 79 (IAVYKVLLTLGLILFTAYFVI). The Extracellular portion of the chain corresponds to 80–348 (QPFSSLAPEP…ICDGTTLSDL (269 aa)).

As to quaternary structure, homodimer. Interacts with BRS3. Interacts (via N-terminus) with SIN3B. Glycosylated.

Its subcellular location is the golgi apparatus membrane. It is found in the cytoplasm. Its function is as follows. Exhibits histone deacetylase (HDAC) enhancer properties. May play a role in cell cycle progression and wound repair of bronchial epithelial cells. This is Bombesin receptor-activated protein C6orf89 homolog from Mus musculus (Mouse).